A 279-amino-acid polypeptide reads, in one-letter code: Serine protease 29 (279 aa).

A signal peptide spans 1 to 17 (MLIQLCLTLFFLGCSIA). In terms of domain architecture, Peptidase S1 spans 31 to 276 (IVGGHSAPQG…FLPWITQQMQ (246 aa)). A disulfide bridge connects residues cysteine 62 and cysteine 78. Active-site charge relay system residues include histidine 77 and aspartate 124. 3 cysteine pairs are disulfide-bonded: cysteine 158–cysteine 234, cysteine 191–cysteine 215, and cysteine 224–cysteine 252. A glycan (N-linked (GlcNAc...) asparagine) is linked at asparagine 197. Serine 228 functions as the Charge relay system in the catalytic mechanism. The N-linked (GlcNAc...) asparagine glycan is linked to asparagine 235.

It belongs to the peptidase S1 family. In terms of assembly, homooligomer, heterodimer and heterotetramer. Able to form homo- and hetero- tetrameric structures. Heterotetramer is far more stable than the homotetramer. As to expression, expressed in embryos and placenta. Found in uterus especially in glandular epithelium during zona lysis and implantation.

It is found in the secreted. Involved in embryo hatching and implantation. The protein is Serine protease 29 (Prss29) of Mus musculus (Mouse).